The chain runs to 283 residues: NADH-ubiquinone oxidoreductase 30.4 kDa subunit, mitochondrial (283 aa).

The N-terminal 17 residues, 1–17 (MASKLCRSRALASALRS), are a transit peptide targeting the mitochondrion. Positions 258–283 (GAGIDRKPESFKLPTPKPETKPEEKK) are disordered.

The protein belongs to the complex I 30 kDa subunit family. In terms of assembly, complex I is composed of about 40 different subunits. This is a component of the iron-sulfur protein fraction.

The protein resides in the mitochondrion inner membrane. It carries out the reaction a ubiquinone + NADH + 5 H(+)(in) = a ubiquinol + NAD(+) + 4 H(+)(out). In terms of biological role, core subunit of the mitochondrial membrane respiratory chain NADH dehydrogenase (Complex I) that is believed to belong to the minimal assembly required for catalysis. Complex I functions in the transfer of electrons from NADH to the respiratory chain. The immediate electron acceptor for the enzyme is believed to be ubiquinone. The protein is NADH-ubiquinone oxidoreductase 30.4 kDa subunit, mitochondrial (nuo-31) of Neurospora crassa (strain ATCC 24698 / 74-OR23-1A / CBS 708.71 / DSM 1257 / FGSC 987).